A 216-amino-acid chain; its full sequence is Ephrin-A1 (216 aa).

The N-terminal stretch at 1 to 28 (MMELYRAAVQLIVGVGLGVGLWLREAQG) is a signal peptide. Residues 29-161 (ERHIVFWNSS…RLRVHVSGRT (133 aa)) enclose the Ephrin RBD domain. N-linked (GlcNAc...) asparagine glycosylation occurs at N36. Cysteines 61 and 102 form a disulfide. A disordered region spans residues 162 to 181 (TPPPVNVHTPRSHIQSDEPE). The GPI-anchor amidated serine moiety is linked to residue S195. Residues 196-216 (AAPGTPCTLYGLLLAALLLRL) constitute a propeptide, removed in mature form.

Belongs to the ephrin family. In terms of assembly, binds to the receptor tyrosine kinases EPHA2, EPHA4, EPHA5, EPHA6 and EPHA7. Also binds with low affinity to EPHA1.

Its subcellular location is the membrane. In terms of biological role, cell surface GPI-bound ligand for Eph receptors, a family of receptor tyrosine kinases which are crucial for migration, repulsion and adhesion during neuronal, vascular and epithelial development. Binds promiscuously Eph receptors residing on adjacent cells, leading to contact-dependent bidirectional signaling into neighboring cells. In Xenopus laevis (African clawed frog), this protein is Ephrin-A1 (efna1).